We begin with the raw amino-acid sequence, 60 residues long: Large ribosomal subunit protein uL30 (60 aa).

The protein belongs to the universal ribosomal protein uL30 family. As to quaternary structure, part of the 50S ribosomal subunit.

The sequence is that of Large ribosomal subunit protein uL30 from Pseudoalteromonas translucida (strain TAC 125).